A 348-amino-acid polypeptide reads, in one-letter code: MKILVIGPSWVGDMMMSQSLYRTLKARYPQAIIDVMAPAWCRPLLSRMPEVNEAIPMPLGHGALEIGERRRLGHSLREKRYDRAWVLPNSFKSALIPFFANIPHRTGWRGEMRYGLLNDARVLDKDAWPLMVERYVALAYDKGVMRAAKDLPQPLLWPQLQVSEGEKSLMCSDFSLSSERPLIGFCPGAEFGPAKRWPHYHYAELAKQLINEGYQVVLFGSAKDHEAGNEILAALNSEQQAWCRNLAGETQLEQAVILIAACKAIVTNDSGLMHVAAALDRPLVALYGPSSPDFTPPLSHKARVIRLITGYHKVRKGDTAQGYHQSLIDITPQRVLEELHSLLSEEGV.

This sequence belongs to the glycosyltransferase 9 family.

It carries out the reaction an L-alpha-D-Hep-(1-&gt;5)-[alpha-Kdo-(2-&gt;4)]-alpha-Kdo-(2-&gt;6)-lipid A + ADP-L-glycero-beta-D-manno-heptose = an L-alpha-D-Hep-(1-&gt;3)-L-alpha-D-Hep-(1-&gt;5)-[alpha-Kdo-(2-&gt;4)]-alpha-Kdo-(2-&gt;6)-lipid A + ADP + H(+). The protein operates within bacterial outer membrane biogenesis; LPS core biosynthesis. Functionally, glycosyltransferase involved in the biosynthesis of the core oligosaccharide region of lipopolysaccharide (LPS). Catalyzes the addition of the second heptose unit to the heptosyl-Kdo2-lipid A module. The protein is Lipopolysaccharide heptosyltransferase 2 of Salmonella typhimurium (strain LT2 / SGSC1412 / ATCC 700720).